A 351-amino-acid polypeptide reads, in one-letter code: Protein EXPRESSION OF TERPENOIDS 1 (351 aa).

Residues 1-23 (MANFFSLGGNQEQQHQEISSSQA) form a disordered region. The segment covering 11 to 22 (QEQQHQEISSSQ) has biased composition (low complexity). Residues cysteine 129, cysteine 132, cysteine 140, cysteine 145, cysteine 149, and cysteine 156 each coordinate Zn(2+). Residues 129–156 (CQDCGNQAKKDCQHMRCRTCCKSRGFQC) constitute a DNA-binding region (zn(2)-C6 fungal-type; degenerate). Residues 170-219 (RRERQQQLAALQQQQQGHNNNNNNHKNKRQREDPSASSLVSTRLPSNTNG) are disordered. The segment covering 175 to 193 (QQLAALQQQQQGHNNNNNN) has biased composition (low complexity). A compositionally biased stretch (polar residues) spans 204–219 (SASSLVSTRLPSNTNG). Residues 258-261 (IGGH) carry the Required for homo- and heterodimerization motif. The segment at 286–320 (TSSGGSAGGVQHHHHNSAAVATATTTSGGDATAAG) is disordered. Residues 303–320 (AAVATATTTSGGDATAAG) show a composition bias toward low complexity.

This sequence belongs to the SHI protein family. As to quaternary structure, forms homodimers and heterodimers with LRP1.

Its subcellular location is the nucleus. Transcription activator involved in the transcriptional regulation of terpene biosynthesis in glandular trichomes. Binds to the promoter of the linalool synthase TPS5 and promotes TPS5 gene transactivation. Acts synergistically with MYC1 in the transactivation of TPS5. This chain is Protein EXPRESSION OF TERPENOIDS 1, found in Solanum lycopersicum (Tomato).